The chain runs to 893 residues: DNA endonuclease RBBP8 (893 aa).

The segment at 22-45 (ELWTKLKEYHDKEVQGLQVKVTKL) is essential for binding to the MRN complex and for RPA focus formation on DNA damage. Residues 35–84 (VQGLQVKVTKLKKERILDAQRLEEFFTKNQQLRDQQKVLQETIKILEDRL) are a coiled coil. The interval 45–160 (LKKERILDAQ…AELACEENII (116 aa)) is required for interaction with LMO4, probably by stabilizing the interaction through RPPB8 dimerization. Glycyl lysine isopeptide (Lys-Gly) (interchain with G-Cter in SUMO2) cross-links involve residues lysine 62 and lysine 115. Residues 117 to 138 (ITELMNEKNTLQEENKKLSEQL) are a coiled coil. Residue lysine 193 forms a Glycyl lysine isopeptide (Lys-Gly) (interchain with G-Cter in SUMO2) linkage. 2 positions are modified to phosphoserine: serine 233 and serine 276. Basic and acidic residues predominate over residues 296–307 (MESARSKEDSLR). Residues 296–324 (MESARSKEDSLRFSDSASKTPPQEFTTRA) form a disordered region. Polar residues predominate over residues 308 to 324 (FSDSASKTPPQEFTTRA). Phosphothreonine is present on threonine 315. Residues serine 325, serine 326, and serine 348 each carry the phosphoserine modification. Glycyl lysine isopeptide (Lys-Gly) (interchain with G-Cter in SUMO2) cross-links involve residues lysine 359 and lysine 377. Serine 378 is modified (phosphoserine). Residues lysine 394, lysine 403, lysine 409, and lysine 437 each participate in a glycyl lysine isopeptide (Lys-Gly) (interchain with G-Cter in SUMO2) cross-link. Residues 489-493 (PLDLS) carry the PXDLS motif motif. Positions 508-556 (NETSKNKLKQATIYEALKPIPKGSSSGRKALSGDCMPAKDSWETYCLQP) are damage-recruitment motif. Lysine 525 participates in a covalent cross-link: Glycyl lysine isopeptide (Lys-Gly) (interchain with G-Cter in SUMO2); alternate. Glycyl lysine isopeptide (Lys-Gly) (interchain with G-Cter in SUMO2) cross-links involve residues lysine 529, lysine 570, and lysine 576. A Glycyl lysine isopeptide (Lys-Gly) (interchain with G-Cter in SUMO2); alternate cross-link involves residue lysine 602. Residues lysine 611, lysine 636, and lysine 638 each participate in a glycyl lysine isopeptide (Lys-Gly) (interchain with G-Cter in SUMO2) cross-link. Positions 639–683 (ALPSNQDTSFENIQWSVDPGADLSQYKMDVTVIDTKDSSHSRLGG) are required for interaction with LMO4, probably by making physical contact with LMO4. Phosphoserine; by ATM is present on serine 662. A Glycyl lysine isopeptide (Lys-Gly) (interchain with G-Cter in SUMO2) cross-link involves residue lysine 674. Serine 677 carries the phosphoserine modification. Lysine 716 is covalently cross-linked (Glycyl lysine isopeptide (Lys-Gly) (interchain with G-Cter in SUMO2)). The residue at position 720 (serine 720) is a Phosphoserine. Serine 742 carries the post-translational modification Phosphoserine; by ATM. Lysine 778 is covalently cross-linked (Glycyl lysine isopeptide (Lys-Gly) (interchain with G-Cter in SUMO2)). The short motif at 836–838 (FRY) is the KLHL15-binding element. Phosphothreonine occurs at positions 843 and 855. Lysine 865 participates in a covalent cross-link: Glycyl lysine isopeptide (Lys-Gly) (interchain with G-Cter in SUMO2). The disordered stretch occupies residues 869 to 893 (DLSPRPKRRQPYNAVFSPKGKEQRT).

This sequence belongs to the COM1/SAE2/CtIP family. In terms of assembly, homotetramer; formed by antiparallel association of helical extensions protruding from the N-termini of two parallel coiled-coil dimers. Forms a dumbbell-shaped particle in which polar globular domains are held about 30 nm apart by a central rod. Homotetramerization is required for DNA-end resection and repair. Interacts (via the PXDLS motif) with CTBP1; the interaction is disrupted via binding of the adenovirus E1A to CTBP1. Component of the BRCA1-RBBP8 complex. Interacts (the Ser-326 phosphorylated form) with BRCA1 (via the C-terminal BRCT domains): the interaction occurs in the G2 phase, ubiquitinates RBBP8 and involves RBBP8 in BRCA1-dependent G2/M checkpoint control on DNA damage. Interacts with RB1. Interacts with the MRN complex. Interacts directly with MRE11; the interaction is required for efficient homologous recombination (HR) and regulation of the MRN complex. Interacts (when phosphorylated by CDK1) with NBN; promoting association with the MRN complex. Interacts with LMO4 (via the LIM zinc-binding 1 domain). Interacts with SIAH1. Interacts with RNF138. Interacts with EXD2. Interacts with CUL3 and KLHL15; this interaction leads to RBBP8 proteasomal degradation. Directly interacts with PIN1; this interaction depends upon RBBP8 phosphorylation, predominantly at Thr-315. Interacts with FZR1; this interaction leads to APC/C-mediated RBBP8 proteasomal degradation. Interacts with AUNIP; leading to recruit RBBP8 to sites of DNA damage. Interacts with SAMHD1. Interacts with HDGFL2. Hyperphosphorylation upon ionizing radiation results in dissociation from BRCA1. Phosphorylation at Thr-843 by CDK1 is essential for the recruitment to DNA and the DNA repair function. Phosphorylation at Thr-843 and Thr-855 promote interaction with NBN and recruitment to double-strand breaks (DSBs). Phosphorylated on Ser-326 as cells enter G2 phase. Phosphorylated at Ser-326 as cells enter G2 phase. This phosphorylation is required for binding BRCA1 and for the G2/M DNA damage transition checkpoint control. Phosphorylation at Thr-315 is required for PIN1-binding, while phosphorylation at Ser-276 serves as a PIN1 isomerization site. Phosphorylation at Thr-315 is cell-cycle dependent. It steadily increases during S phase, peaks at late S/G2 phase, and drops at G1. Phosphorylation is not required for tetramerization. Binds to DNA more strongly when dephosphorylated. Post-translationally, ubiquitinated. Ubiquitination at multiple sites by BRCA1 (via its N-terminal RING domain) does not lead to its proteasomal degradation but instead the ubiquitinated RBBP8 binds to chromatin following DNA damage and may play a role in G2/M checkpoint control. Ubiquitinated by RNF138 at its N-terminus. Ubiquitinated through 'Lys-48' by the E3 CUL3-KLHL15 complex; this modification leads to proteasomal degradation. Ubiquitinated by the E3 FZR1/APC/C complex; this modification leads to proteasomal degradation.

The protein localises to the nucleus. Its subcellular location is the chromosome. Endonuclease that cooperates with the MRE11-RAD50-NBN (MRN) complex in DNA-end resection, the first step of double-strand break (DSB) repair through the homologous recombination (HR) pathway. HR is restricted to S and G2 phases of the cell cycle and preferentially repairs DSBs resulting from replication fork collapse. Key determinant of DSB repair pathway choice, as it commits cells to HR by preventing classical non-homologous end-joining (NHEJ). Specifically promotes the endonuclease activity of the MRN complex to clear DNA ends containing protein adducts: recruited to DSBs by NBN following phosphorylation by CDK1, and promotes the endonuclease activity of MRE11 to clear protein-DNA adducts and generate clean double-strand break ends. Functions downstream of the MRN complex and ATM, promotes ATR activation and its recruitment to DSBs in the S/G2 phase facilitating the generation of ssDNA. Component of the BRCA1-RBBP8 complex that regulates CHEK1 activation and controls cell cycle G2/M checkpoints on DNA damage. During immunoglobulin heavy chain class-switch recombination, promotes microhomology-mediated alternative end joining (A-NHEJ) and plays an essential role in chromosomal translocations. Binds preferentially to DNA Y-junctions and to DNA substrates with blocked ends and promotes intermolecular DNA bridging. The chain is DNA endonuclease RBBP8 (Rbbp8) from Mus musculus (Mouse).